The sequence spans 177 residues: Tumor necrosis factor ligand superfamily member 18 (177 aa).

Residues 1 to 27 (MCLSHLENMPLSHSRTQGAQRSSWKLW) lie on the Cytoplasmic side of the membrane. Residues 28–48 (LFCSIVMLLFLCSFSWLIFIF) form a helical; Signal-anchor for type II membrane protein membrane-spanning segment. The region spanning 47–170 (IFLQLETAKE…NNTYWGIILL (124 aa)) is the THD domain. The Extracellular portion of the chain corresponds to 49-177 (LQLETAKEPC…ILLANPQFIS (129 aa)). A disulfide bridge links cysteine 58 with cysteine 78. Asparagine 129 and asparagine 161 each carry an N-linked (GlcNAc...) asparagine glycan.

Belongs to the tumor necrosis factor family. In terms of assembly, homodimer. Homotrimer. Expressed at high levels in the small intestine, ovary, testis, kidney and endothelial cells.

It is found in the cell membrane. Its function is as follows. Cytokine that binds to TNFRSF18/AITR/GITR. Regulates T-cell responses. Can function as costimulator and lower the threshold for T-cell activation and T-cell proliferation. Important for interactions between activated T-lymphocytes and endothelial cells. Mediates activation of NF-kappa-B. Triggers increased phosphorylation of STAT1 and up-regulates expression of VCAM1 and ICAM1. Promotes leukocyte adhesion to endothelial cells. Regulates migration of monocytes from the splenic reservoir to sites of inflammation. In Homo sapiens (Human), this protein is Tumor necrosis factor ligand superfamily member 18.